Reading from the N-terminus, the 205-residue chain is Probable GTP-binding protein EngB (205 aa).

The region spanning 8–195 (RDAEVVLIGR…NEAVRHHLHE (188 aa)) is the EngB-type G domain. GTP-binding positions include 16–23 (GRSNVGKS), 41–45 (GVTRS), 60–63 (DLPG), 140–143 (NKMD), and 175–177 (ISA). Positions 23 and 43 each coordinate Mg(2+).

It belongs to the TRAFAC class TrmE-Era-EngA-EngB-Septin-like GTPase superfamily. EngB GTPase family. Mg(2+) serves as cofactor.

In terms of biological role, necessary for normal cell division and for the maintenance of normal septation. This Haloarcula marismortui (strain ATCC 43049 / DSM 3752 / JCM 8966 / VKM B-1809) (Halobacterium marismortui) protein is Probable GTP-binding protein EngB.